The primary structure comprises 203 residues: Thymidylate kinase (203 aa).

Residue 14–21 participates in ATP binding; it reads GMDGIGKS.

The protein belongs to the thymidylate kinase family.

It catalyses the reaction dTMP + ATP = dTDP + ADP. Phosphorylation of dTMP to form dTDP in both de novo and salvage pathways of dTTP synthesis. The polypeptide is Thymidylate kinase (Rickettsia typhi (strain ATCC VR-144 / Wilmington)).